The following is a 378-amino-acid chain: Ribosomal RNA large subunit methyltransferase G (378 aa).

The protein belongs to the methyltransferase superfamily. RlmG family.

The protein localises to the cytoplasm. It catalyses the reaction guanosine(1835) in 23S rRNA + S-adenosyl-L-methionine = N(2)-methylguanosine(1835) in 23S rRNA + S-adenosyl-L-homocysteine + H(+). Functionally, specifically methylates the guanine in position 1835 (m2G1835) of 23S rRNA. The polypeptide is Ribosomal RNA large subunit methyltransferase G (Shigella flexneri).